Here is a 258-residue protein sequence, read N- to C-terminus: Probable F-box protein At2g29610 (258 aa).

Residues 1–25 (MVELSEIPGDPNGADPNNNPQEEDE) are disordered. Over residues 8-20 (PGDPNGADPNNNP) the composition is skewed to low complexity. One can recognise an F-box domain in the interval 28-74 (LPILLQLPEELIERIIAHFPQCYSPSPILVCETFRQVINSDHFYYVT).

This chain is Probable F-box protein At2g29610, found in Arabidopsis thaliana (Mouse-ear cress).